The sequence spans 168 residues: Plastocyanin, chloroplastic (168 aa).

Positions 70–168 constitute a Plastocyanin-like domain; it reads VEVLLGGGDG…AGMVGKVTVN (99 aa). Residues His106, Cys153, His156, and Met161 each contribute to the Cu cation site.

Belongs to the plastocyanin family. The cofactor is Cu(2+).

The protein resides in the plastid. The protein localises to the chloroplast thylakoid membrane. Functionally, participates in electron transfer between P700 and the cytochrome b6-f complex in photosystem I. This is Plastocyanin, chloroplastic (PETE) from Spinacia oleracea (Spinach).